The chain runs to 223 residues: MSPAAAPLTLALSKGRIFEETMPLLAEAGIEVPENPESSRKLILPTSDPGLRLIIVRASDVPTYVQYGAADLGIAGKDVLIEHAAQQSGRLYQPIDLNIAKCRLCVAVRQDFDYQAAVHQGARLRVATKYVQSAREHFAAKGVHVDIIKLYGSMELAPLVGLADAIVDLVSTGGTLRANGLAAVEDVMPISSRLIVNQAALKTRGARLQPLIDAFRRASERIA.

It belongs to the ATP phosphoribosyltransferase family. Short subfamily. Heteromultimer composed of HisG and HisZ subunits.

Its subcellular location is the cytoplasm. It catalyses the reaction 1-(5-phospho-beta-D-ribosyl)-ATP + diphosphate = 5-phospho-alpha-D-ribose 1-diphosphate + ATP. The protein operates within amino-acid biosynthesis; L-histidine biosynthesis; L-histidine from 5-phospho-alpha-D-ribose 1-diphosphate: step 1/9. Functionally, catalyzes the condensation of ATP and 5-phosphoribose 1-diphosphate to form N'-(5'-phosphoribosyl)-ATP (PR-ATP). Has a crucial role in the pathway because the rate of histidine biosynthesis seems to be controlled primarily by regulation of HisG enzymatic activity. The polypeptide is ATP phosphoribosyltransferase (Bordetella bronchiseptica (strain ATCC BAA-588 / NCTC 13252 / RB50) (Alcaligenes bronchisepticus)).